A 381-amino-acid polypeptide reads, in one-letter code: Succinyl-diaminopimelate desuccinylase (381 aa).

H71 is a Zn(2+) binding site. D73 is a catalytic residue. D104 is a Zn(2+) binding site. The Proton acceptor role is filled by E136. Positions 137, 166, and 351 each coordinate Zn(2+).

This sequence belongs to the peptidase M20A family. DapE subfamily. Homodimer. It depends on Zn(2+) as a cofactor. Co(2+) is required as a cofactor.

The enzyme catalyses N-succinyl-(2S,6S)-2,6-diaminopimelate + H2O = (2S,6S)-2,6-diaminopimelate + succinate. Its pathway is amino-acid biosynthesis; L-lysine biosynthesis via DAP pathway; LL-2,6-diaminopimelate from (S)-tetrahydrodipicolinate (succinylase route): step 3/3. In terms of biological role, catalyzes the hydrolysis of N-succinyl-L,L-diaminopimelic acid (SDAP), forming succinate and LL-2,6-diaminopimelate (DAP), an intermediate involved in the bacterial biosynthesis of lysine and meso-diaminopimelic acid, an essential component of bacterial cell walls. This chain is Succinyl-diaminopimelate desuccinylase, found in Ehrlichia chaffeensis (strain ATCC CRL-10679 / Arkansas).